The sequence spans 252 residues: 5'-nucleotidase SurE (252 aa).

A divalent metal cation-binding residues include Asp-8, Asp-9, Ser-39, and Asn-91.

The protein belongs to the SurE nucleotidase family. Requires a divalent metal cation as cofactor.

It localises to the cytoplasm. The enzyme catalyses a ribonucleoside 5'-phosphate + H2O = a ribonucleoside + phosphate. Its function is as follows. Nucleotidase that shows phosphatase activity on nucleoside 5'-monophosphates. The protein is 5'-nucleotidase SurE of Variovorax paradoxus (strain S110).